The chain runs to 273 residues: MAIVKCKPTSPGRRHVVKVVTPELHKGKPFAGLLEEKRKTGGRNNNGRITTRHIGGGHKQHYRLIDFKRNKDGIPAKIERLEYDPNRSANIALVLYADGERRYILAPKNLKAGDPIVSGVDAPIKAGNALPMRNIPVGTTVHAVEMKPGKGAQIARSAGASVQILAREGAYVTLRLRSGEVRKVLAECRATVGEVGNAEHMLRQLGKAGANRWRGIRPTVRGMAMNPVDHPHGGGEGRNKGIQPVSPWGTPAKGYRTRSNKRTDKYIVRRRNK.

The tract at residues 222–273 (GMAMNPVDHPHGGGEGRNKGIQPVSPWGTPAKGYRTRSNKRTDKYIVRRRNK) is disordered. Basic and acidic residues predominate over residues 229 to 239 (DHPHGGGEGRN).

This sequence belongs to the universal ribosomal protein uL2 family. As to quaternary structure, part of the 50S ribosomal subunit. Forms a bridge to the 30S subunit in the 70S ribosome.

Its function is as follows. One of the primary rRNA binding proteins. Required for association of the 30S and 50S subunits to form the 70S ribosome, for tRNA binding and peptide bond formation. It has been suggested to have peptidyltransferase activity; this is somewhat controversial. Makes several contacts with the 16S rRNA in the 70S ribosome. The polypeptide is Large ribosomal subunit protein uL2 (Tolumonas auensis (strain DSM 9187 / NBRC 110442 / TA 4)).